Here is a 412-residue protein sequence, read N- to C-terminus: Proteasome-activating nucleotidase (412 aa).

Positions E15–S72 form a coiled coil. Residues G197–L202 and H336 each bind ATP. The segment at M410 to A412 is docks into pockets in the proteasome alpha-ring to cause gate opening.

The protein belongs to the AAA ATPase family. In terms of assembly, homohexamer. The hexameric complex has a two-ring architecture resembling a top hat that caps the 20S proteasome core at one or both ends. Upon ATP-binding, the C-terminus of PAN interacts with the alpha-rings of the proteasome core by binding to the intersubunit pockets.

Its subcellular location is the cytoplasm. ATPase which is responsible for recognizing, binding, unfolding and translocation of substrate proteins into the archaeal 20S proteasome core particle. Is essential for opening the gate of the 20S proteasome via an interaction with its C-terminus, thereby allowing substrate entry and access to the site of proteolysis. Thus, the C-termini of the proteasomal ATPase function like a 'key in a lock' to induce gate opening and therefore regulate proteolysis. Unfolding activity requires energy from ATP hydrolysis, whereas ATP binding alone promotes ATPase-20S proteasome association which triggers gate opening, and supports translocation of unfolded substrates. The chain is Proteasome-activating nucleotidase from Methanosphaerula palustris (strain ATCC BAA-1556 / DSM 19958 / E1-9c).